Consider the following 81-residue polypeptide: MKTLLLTLVVVTIVCLDLGYTRKCNKLVPLFYKTCPAGKNLCYKMFMVSNLTVPVKRGCIDVCPKSSLLVKYVCCNTDRCN.

Residues 1 to 21 (MKTLLLTLVVVTIVCLDLGYT) form the signal peptide. 4 cysteine pairs are disulfide-bonded: Cys24–Cys42, Cys35–Cys59, Cys63–Cys74, and Cys75–Cys80.

It belongs to the three-finger toxin family. Short-chain subfamily. Type IA cytotoxin sub-subfamily. Monomer in solution; Homodimer and oligomer in the presence of negatively charged lipids forming a pore with a size ranging between 20 and 30 Angstroms. In terms of tissue distribution, expressed by the venom gland.

The protein localises to the secreted. It localises to the target cell membrane. In terms of biological role, shows cytolytic activity on many different cells by forming pore in lipid membranes. In vivo, increases heart rate or kills the animal by cardiac arrest. In addition, it binds to heparin with high affinity, interacts with Kv channel-interacting protein 1 (KCNIP1) in a calcium-independent manner, and binds to integrin alpha-V/beta-3 (ITGAV/ITGB3) with moderate affinity. In Naja atra (Chinese cobra), this protein is Cytotoxin 4N.